Reading from the N-terminus, the 434-residue chain is Protein trichome birefringence-like 3 (434 aa).

A helical; Signal-anchor for type II membrane protein membrane pass occupies residues 15 to 35; that stretch reads IPLSIIVLVLCGFMFFILLYT. The short motif at 166-168 is the GDS motif element; the sequence is GDS. The short motif at 413–427 is the DCXHWCLPGXXDXWN motif element; the sequence is DCIHWCLPGLPDTWN.

This sequence belongs to the PC-esterase family. TBL subfamily.

The protein localises to the golgi apparatus membrane. Involved in secondary cell wall cellulose deposition. Required for normal stem development. May act as a bridging protein that binds pectin and other cell wall polysaccharides. Probably involved in maintaining esterification of pectins. May be involved in the specific O-acetylation of cell wall polymers. This chain is Protein trichome birefringence-like 3 (TBL3), found in Arabidopsis thaliana (Mouse-ear cress).